A 354-amino-acid polypeptide reads, in one-letter code: Methylthioribose-1-phosphate isomerase (354 aa).

The active-site Proton donor is D246.

The protein belongs to the eIF-2B alpha/beta/delta subunits family. MtnA subfamily.

The protein resides in the cytoplasm. It localises to the nucleus. The enzyme catalyses 5-(methylsulfanyl)-alpha-D-ribose 1-phosphate = 5-(methylsulfanyl)-D-ribulose 1-phosphate. It functions in the pathway amino-acid biosynthesis; L-methionine biosynthesis via salvage pathway; L-methionine from S-methyl-5-thio-alpha-D-ribose 1-phosphate: step 1/6. Catalyzes the interconversion of methylthioribose-1-phosphate (MTR-1-P) into methylthioribulose-1-phosphate (MTRu-1-P). This Xenopus laevis (African clawed frog) protein is Methylthioribose-1-phosphate isomerase (mri1).